Reading from the N-terminus, the 199-residue chain is Outer dense fiber protein 4 (199 aa).

Over residues 1–14 (MNIRSLERAGRAGK) the composition is skewed to basic and acidic residues. Residues 1 to 25 (MNIRSLERAGRAGKQDGVAVSPGQE) are disordered. S53 carries the post-translational modification Phosphoserine. Helical transmembrane passes span 68-88 (IAQVLASELSLLAFILLVVMV), 109-128 (VTTKIYTSVHIMSLGLLHIY), and 159-179 (LALGLGIILTIWLHLPYIPGL).

It is found in the membrane. In terms of biological role, component of the outer dense fibers (ODF) of spermatozoa which could be involved in sperm tail structure, sperm movement and general organization of cellular cytoskeleton. The chain is Outer dense fiber protein 4 (ODF4) from Bos taurus (Bovine).